We begin with the raw amino-acid sequence, 162 residues long: MEKVFEKLMYASRWIMAPIYLGLSLILFALGIKFFQEIFHLIPNIFEIAEVDLVLITLSLIDITLVGGLLIMVMFSGYENFVSQLDVGESSEKLNWLGKMDAGSLKNKVAASIVAISSIHLLKVFMNAENIANDKIMWYLLIHITFVLSAFAMGYLDKITRK.

Helical transmembrane passes span 15–35 (IMAPIYLGLSLILFALGIKFF), 53–73 (LVLITLSLIDITLVGGLLIMV), and 136–156 (IMWYLLIHITFVLSAFAMGYL).

It belongs to the UPF0114 family.

It is found in the cell membrane. The protein is UPF0114 protein Sden_0436 of Shewanella denitrificans (strain OS217 / ATCC BAA-1090 / DSM 15013).